An 89-amino-acid chain; its full sequence is Ubiquinol-cytochrome-c reductase complex assembly factor 3 (89 aa).

The Mitochondrial matrix portion of the chain corresponds to 1–7; sequence MEAARKA. The chain crosses the membrane as a helical span at residues 8-28; sequence LAVVAVLGAGGGVGSILFALV. A mediates lipid-binding region spans residues 23–80; sequence ILFALVTPGELQKQLMLQEMPERDSRRRDEAVRTKELVMATLKDAAATKENVAWRRNW. The Mitochondrial intermembrane portion of the chain corresponds to 29 to 89; the sequence is TPGELQKQLM…WTVRGDGRSA (61 aa).

The protein belongs to the UQCC3 family. Associates with the ubiquinol-cytochrome c reductase complex (mitochondrial respiratory chain complex III(CIII) or cytochrome b-c1 complex). Interacts with UQCC1. Forms a complex, named COMC, composed of UQCC1, UQCC2; UQCC3 and UQCC4; mediates MT-CYB hemylation and association with the first nuclear-encoded complex III subunit UQCRQ. Probably cleaved by OMA1 under mitochondrial stress conditions.

Its subcellular location is the mitochondrion inner membrane. Functionally, required for the assembly of the ubiquinol-cytochrome c reductase complex (mitochondrial respiratory chain complex III or cytochrome b-c1 complex), mediating cytochrome b recruitment and probably stabilization within the complex. Thereby, plays an important role in ATP production by mitochondria. Cardiolipin-binding protein, it may also control the cardiolipin composition of mitochondria membranes and their morphology. The sequence is that of Ubiquinol-cytochrome-c reductase complex assembly factor 3 from Rattus norvegicus (Rat).